We begin with the raw amino-acid sequence, 277 residues long: 4-hydroxy-3-prenylphenylpyruvate oxygenase/4-hydroxy-3-prenylbenzoate synthase (277 aa).

The protein belongs to the aldolase class II family. As to quaternary structure, homotetramer. Fe(2+) serves as cofactor.

It carries out the reaction 3-dimethylallyl-4-hydroxyphenylpyruvate + O2 = 3-dimethylallyl-4-hydroxymandelate + CO2. It catalyses the reaction 3-dimethylallyl-4-hydroxymandelate + O2 = 3-dimethylallyl-4-hydroxybenzoate + CO2 + H2O. It participates in antibiotic biosynthesis. Its activity is regulated as follows. Activated by ascorbate. Its function is as follows. Involved in the biosynthesis of ring A of the aminocoumarin antibiotic clorobiocin. Catalyzes two consecutive oxidative decarboxylations of 3-dimethylallyl-4-hydroxyphenylpyruvate (3DMA-4HPP) to yield 3-dimethylallyl-4-hydroxybenzoate (3DMA-4HB) via the 3-dimethylallyl-4-hydroxymandelic acid (3DMA-4HMA) intermediate. This chain is 4-hydroxy-3-prenylphenylpyruvate oxygenase/4-hydroxy-3-prenylbenzoate synthase, found in Streptomyces roseochromogenus subsp. oscitans.